A 156-amino-acid chain; its full sequence is Pre-mRNA-splicing factor SNT309 (156 aa).

In terms of assembly, associated with the spliceosome.

It is found in the nucleus. Functionally, involved in pre-mRNA splicing. This is Pre-mRNA-splicing factor SNT309 (SNT309) from Candida glabrata (strain ATCC 2001 / BCRC 20586 / JCM 3761 / NBRC 0622 / NRRL Y-65 / CBS 138) (Yeast).